The sequence spans 122 residues: Large ribosomal subunit protein uL14 (122 aa).

It belongs to the universal ribosomal protein uL14 family. In terms of assembly, part of the 50S ribosomal subunit. Forms a cluster with proteins L3 and L19. In the 70S ribosome, L14 and L19 interact and together make contacts with the 16S rRNA in bridges B5 and B8.

In terms of biological role, binds to 23S rRNA. Forms part of two intersubunit bridges in the 70S ribosome. The polypeptide is Large ribosomal subunit protein uL14 (Chlorobium chlorochromatii (strain CaD3)).